The sequence spans 239 residues: Large ribosomal subunit protein uL1 (239 aa).

It belongs to the universal ribosomal protein uL1 family. In terms of assembly, part of the 50S ribosomal subunit.

Binds directly to 23S rRNA. The L1 stalk is quite mobile in the ribosome, and is involved in E site tRNA release. Its function is as follows. Protein L1 is also a translational repressor protein, it controls the translation of the L11 operon by binding to its mRNA. This is Large ribosomal subunit protein uL1 from Rhodococcus erythropolis (strain PR4 / NBRC 100887).